Here is a 337-residue protein sequence, read N- to C-terminus: Aspartate-semialdehyde dehydrogenase 2 (337 aa).

NADP(+) is bound by residues 13–16 (TGAV) and 41–42 (RS). Arg101 provides a ligand contact to phosphate. Cys132 acts as the Acyl-thioester intermediate in catalysis. A substrate-binding site is contributed by Gln159. 162 to 163 (SG) serves as a coordination point for NADP(+). Residue Lys216 coordinates phosphate. Arg238 contributes to the substrate binding site. The Proton acceptor role is filled by His245. Asn316 is an NADP(+) binding site.

It belongs to the aspartate-semialdehyde dehydrogenase family. As to quaternary structure, homodimer.

The catalysed reaction is L-aspartate 4-semialdehyde + phosphate + NADP(+) = 4-phospho-L-aspartate + NADPH + H(+). It participates in amino-acid biosynthesis; L-lysine biosynthesis via DAP pathway; (S)-tetrahydrodipicolinate from L-aspartate: step 2/4. Its pathway is amino-acid biosynthesis; L-methionine biosynthesis via de novo pathway; L-homoserine from L-aspartate: step 2/3. The protein operates within amino-acid biosynthesis; L-threonine biosynthesis; L-threonine from L-aspartate: step 2/5. In terms of biological role, catalyzes the NADPH-dependent formation of L-aspartate-semialdehyde (L-ASA) by the reductive dephosphorylation of L-aspartyl-4-phosphate. The sequence is that of Aspartate-semialdehyde dehydrogenase 2 (asd2) from Vibrio cholerae serotype O1 (strain ATCC 39315 / El Tor Inaba N16961).